Here is an 823-residue protein sequence, read N- to C-terminus: Leucine--tRNA ligase (823 aa).

The short motif at 42–52 is the 'HIGH' region element; that stretch reads PYPSGTLHMGH. A 'KMSKS' region motif is present at residues 575–579; sequence KMSKS. K578 is a binding site for ATP.

Belongs to the class-I aminoacyl-tRNA synthetase family.

The protein resides in the cytoplasm. It catalyses the reaction tRNA(Leu) + L-leucine + ATP = L-leucyl-tRNA(Leu) + AMP + diphosphate. The protein is Leucine--tRNA ligase of Legionella pneumophila (strain Lens).